A 1447-amino-acid chain; its full sequence is DNA topoisomerase 2 (1447 aa).

ATP is bound by residues asparagine 72, asparagine 101, serine 129–asparagine 131, and glycine 142–lysine 149. The segment at lysine 323–lysine 325 is interaction with DNA. Residue glutamine 357 to lysine 359 coordinates ATP. Residues cysteine 435 to glutamate 552 enclose the Toprim domain. Mg(2+) contacts are provided by glutamate 441, aspartate 521, and aspartate 523. In terms of domain architecture, Topo IIA-type catalytic spans isoleucine 695–leucine 1169. The active-site O-(5'-phospho-DNA)-tyrosine intermediate is tyrosine 785. Positions lysine 972 to glutamine 981 are interaction with DNA. Disordered regions lie at residues glutamate 1079 to proline 1110, glutamate 1183 to proline 1231, and alanine 1246 to cysteine 1447. A compositionally biased stretch (acidic residues) spans alanine 1081–alanine 1094. A compositionally biased stretch (basic and acidic residues) spans lysine 1255 to proline 1281. A compositionally biased stretch (acidic residues) spans alanine 1283 to alanine 1293. The residue at position 1284 (serine 1284) is a Phosphoserine. Basic and acidic residues-rich tracts occupy residues valine 1310 to asparagine 1325 and serine 1332 to glycine 1359. Serine 1344 bears the Phosphoserine mark. Residue threonine 1352 is modified to Phosphothreonine. Phosphoserine occurs at positions 1374, 1385, 1392, and 1396. Over residues serine 1374 to aspartate 1394 the composition is skewed to acidic residues. Residues aspartate 1395–glutamate 1408 show a composition bias toward basic and acidic residues. The span at alanine 1413–arginine 1423 shows a compositional bias: basic residues. Acidic residues predominate over residues glutamate 1427–cysteine 1447.

It belongs to the type II topoisomerase family. Homodimer. Interacts with mod(mdg4). Interacts with barr. Interacts with ph-p. Interacts with mle; the interaction mediates association with the MSL dosage compensation complex. Requires Mg(2+) as cofactor. It depends on Mn(2+) as a cofactor. Ca(2+) is required as a cofactor. Phosphorylated. Phosphorylation by casein kinase II enhances ATPase activity.

It localises to the nucleus. The protein resides in the chromosome. The protein localises to the cytoplasm. It catalyses the reaction ATP-dependent breakage, passage and rejoining of double-stranded DNA.. Its function is as follows. Control of topological states of DNA by transient breakage and subsequent rejoining of DNA strands. Topoisomerase II makes double-strand breaks. Essential during mitosis and meiosis for proper segregation of daughter chromosomes. During meiosis, it disrupts heterochromatic connections between achiasmate and chiasmate homologs after spindle assembly so that chromosomes can separate at prometaphase I. During mitosis, it functions in the separation of sister chromatids by establishing amphitelic kinetochore attachments in mitotic spindles. May have a role in chromatin condensation and chromosome structure. May be involved in X-chromosome dosage compensation, perhaps by modifying the topological state of compensated genes. Regulates activity of the gypsy chromatin insulator complex by binding to mod(mdg4) and preventing its degradation. This Drosophila melanogaster (Fruit fly) protein is DNA topoisomerase 2.